Reading from the N-terminus, the 390-residue chain is MSANAETQTPQQPVKKSGKRKRLLLLLTLLFIIIAVAIGIYWFLVLRHFEETDDAYVAGNQIQIMSQVSGSVTKVWADNTDFVKEGDVLVTLDPTDARQAFEKAKTALASSVRQTHQLMINSKQLQANIEVQKIALAKAQSDYNRRVPLGNANLIGREELQHARDAVTSAQAQLDVAIQQYNANQAMILGTKLEDQPAVQQAATEVRNAWLALERTRIISPMTGYVSRRAVQPGAQISPTTPLMAVVPATNMWVDANFKETQIANMRIGQPVTITTDIYGDDVKYTGKVVGLDMGTGSAFSLLPAQNATGNWIKVVQRLPVRIELDQKQLEQYPLRIGLSTLVSVNTTNRDGQVLANKVRSTPVAVSTAREISLAPVNKLIDDIVKANAG.

The Cytoplasmic segment spans residues 1–24; sequence MSANAETQTPQQPVKKSGKRKRLL. A helical membrane pass occupies residues 25–45; sequence LLLTLLFIIIAVAIGIYWFLV. Residues 46–390 are Periplasmic-facing; that stretch reads LRHFEETDDA…IDDIVKANAG (345 aa). Residues 120 to 180 are a coiled coil; it reads INSKQLQANI…QAQLDVAIQQ (61 aa).

The protein belongs to the membrane fusion protein (MFP) (TC 8.A.1) family. Homodimer and homotrimer. Part of the tripartite efflux system EmrAB-TolC, which is composed of an inner membrane transporter, EmrB, a periplasmic membrane fusion protein, EmrA, and an outer membrane component, TolC. The complex forms a large protein conduit and can translocate molecules across both the inner and outer membranes. Interacts with EmrB. EmrAB complex forms a dimer in vitro.

It localises to the cell inner membrane. Its function is as follows. Part of the tripartite efflux system EmrAB-TolC, which confers resistance to antibiotics such as CCCP, FCCP, 2,4-dinitrophenol and nalidixic acid. EmrA is a drug-binding protein that provides a physical link between EmrB and TolC. The protein is Multidrug export protein EmrA (emrA) of Escherichia coli (strain K12).